A 151-amino-acid chain; its full sequence is Nucleoside diphosphate kinase (151 aa).

Positions 11, 59, 87, 93, 104, and 114 each coordinate ATP. Catalysis depends on H117, which acts as the Pros-phosphohistidine intermediate.

Belongs to the NDK family. As to quaternary structure, homotetramer. Requires Mg(2+) as cofactor.

Its subcellular location is the cytoplasm. It catalyses the reaction a 2'-deoxyribonucleoside 5'-diphosphate + ATP = a 2'-deoxyribonucleoside 5'-triphosphate + ADP. The enzyme catalyses a ribonucleoside 5'-diphosphate + ATP = a ribonucleoside 5'-triphosphate + ADP. Functionally, major role in the synthesis of nucleoside triphosphates other than ATP. The ATP gamma phosphate is transferred to the NDP beta phosphate via a ping-pong mechanism, using a phosphorylated active-site intermediate. This is Nucleoside diphosphate kinase from Prochlorococcus marinus (strain NATL2A).